Consider the following 2226-residue polypeptide: Rotatin (2226 aa).

The segment at Glu-295–Asn-346 is disordered. Residues Pro-307–Arg-319 are compositionally biased toward low complexity. Ser-311 carries the post-translational modification Phosphoserine. Lys-813 is modified (N6-acetyllysine).

Belongs to the rotatin family. In terms of assembly, interacts with PPP1R35; this interaction allows the mutual recruitment to the centriole.

It localises to the cytoplasm. Its subcellular location is the cytoskeleton. It is found in the cilium basal body. In terms of biological role, involved in the genetic cascade that governs left-right specification. Required for correct asymmetric expression of NODAL, LEFTY and PITX2. The protein is Rotatin of Mus musculus (Mouse).